Consider the following 317-residue polypeptide: Prenyl transferase paxC (317 aa).

Substrate is bound by residues Lys-53 and His-86. Residues Asp-93 and Asp-97 each coordinate Mg(2+). Substrate is bound by residues Arg-102, Lys-186, Thr-187, Gln-216, Asn-223, and Lys-233.

Belongs to the FPP/GGPP synthase family.

Its pathway is secondary metabolite biosynthesis. In terms of biological role, prenyl transferase; part of the gene cluster that mediates the biosynthesis of paxalline, a mycotoxin that acts as an inhibitor of mammalian maxi-K channels. PaxG, the geranylgeranyl diphosphate (GGPP) synthase is proposed to catalyze the first step in paxilline biosynthesis. Condensation of indole-3-glycerol phosphate with GGPP by paxC then forms 3-geranylgeranylindole (3-GGI), followed by epoxidation and cyclization of this intermediate (by paxM and paxB) to form paspaline. Paspaline is subsequently converted to 13-desoxypaxilline by paxP, the latter being then converted to paxilline by paxQ. Finally paxilline can be mono- and di-prenylated by paxD. The sequence is that of Prenyl transferase paxC from Penicillium paxilli.